The primary structure comprises 164 residues: Putative 4-hydroxy-4-methyl-2-oxoglutarate aldolase (164 aa).

Substrate-binding positions include 75 to 78 and Arg-97; that span reads GDLI. An a divalent metal cation-binding site is contributed by Asp-98.

Belongs to the class II aldolase/RraA-like family. Homotrimer. It depends on a divalent metal cation as a cofactor.

It carries out the reaction 4-hydroxy-4-methyl-2-oxoglutarate = 2 pyruvate. It catalyses the reaction oxaloacetate + H(+) = pyruvate + CO2. In terms of biological role, catalyzes the aldol cleavage of 4-hydroxy-4-methyl-2-oxoglutarate (HMG) into 2 molecules of pyruvate. Also contains a secondary oxaloacetate (OAA) decarboxylase activity due to the common pyruvate enolate transition state formed following C-C bond cleavage in the retro-aldol and decarboxylation reactions. This chain is Putative 4-hydroxy-4-methyl-2-oxoglutarate aldolase, found in Shewanella oneidensis (strain ATCC 700550 / JCM 31522 / CIP 106686 / LMG 19005 / NCIMB 14063 / MR-1).